A 101-amino-acid chain; its full sequence is Conantokin-L (101 aa).

The first 21 residues, 1 to 21, serve as a signal peptide directing secretion; sequence MQLYTYLYLLVPLVTFHLILG. The propeptide occupies 22–80; sequence TGTLDHGGALTERRSTDAIALKPEPVLLQKSSARSTDDNGNDRLTQMKRILKKRGNKAR. A 4-carboxyglutamate mark is found at Glu83, Glu84, Glu91, and Glu95. A divalent metal cation-binding residues include Glu91 and Glu95. Asparagine amide is present on Asn99.

The protein belongs to the conotoxin B superfamily. The cofactor is Ca(2+). Mg(2+) is required as a cofactor. As to expression, expressed by the venom duct.

The protein resides in the secreted. Conantokins inhibit N-methyl-D-aspartate (NMDA) receptors. This toxin is far less potent as an anticonvulsant compound than conantokin-R. It induces sleep-like symptoms in mice. This chain is Conantokin-L, found in Conus lynceus (Lynceus cone).